The following is a 590-amino-acid chain: Aspartate--tRNA(Asp/Asn) ligase (590 aa).

L-aspartate is bound at residue E175. The aspartate stretch occupies residues 199–202; sequence QQYK. Residues R221 and H450 each contribute to the L-aspartate site. 221–223 is an ATP binding site; the sequence is RDE. Residue E484 coordinates ATP. R491 lines the L-aspartate pocket. 536 to 539 contacts ATP; the sequence is GVDR.

It belongs to the class-II aminoacyl-tRNA synthetase family. Type 1 subfamily. In terms of assembly, homodimer.

The protein localises to the cytoplasm. It carries out the reaction tRNA(Asx) + L-aspartate + ATP = L-aspartyl-tRNA(Asx) + AMP + diphosphate. Functionally, aspartyl-tRNA synthetase with relaxed tRNA specificity since it is able to aspartylate not only its cognate tRNA(Asp) but also tRNA(Asn). Reaction proceeds in two steps: L-aspartate is first activated by ATP to form Asp-AMP and then transferred to the acceptor end of tRNA(Asp/Asn). This Nitrobacter hamburgensis (strain DSM 10229 / NCIMB 13809 / X14) protein is Aspartate--tRNA(Asp/Asn) ligase.